The sequence spans 1112 residues: Mediator of RNA polymerase II transcription subunit 14 (1112 aa).

Disordered stretches follow at residues 1–76 (MPGV…INES), 120–141 (SPHG…QSPE), and 1088–1112 (TNSA…ITID). Over residues 20-39 (SPDNVSSTPFPQERVNQSGD) the composition is skewed to polar residues. Basic and acidic residues predominate over residues 64 to 73 (IETHTGKDGI). A compositionally biased stretch (polar residues) spans 1088–1099 (TNSAGARSSQQC).

This sequence belongs to the Mediator complex subunit 14 family. Component of the Mediator complex.

It localises to the nucleus. Component of the Mediator complex, a coactivator involved in the regulated transcription of nearly all RNA polymerase II-dependent genes. Mediator functions as a bridge to convey information from gene-specific regulatory proteins to the basal RNA polymerase II transcription machinery. Mediator is recruited to promoters by direct interactions with regulatory proteins and serves as a scaffold for the assembly of a functional preinitiation complex with RNA polymerase II and the general transcription factors. The protein is Mediator of RNA polymerase II transcription subunit 14 (rgr1) of Aspergillus clavatus (strain ATCC 1007 / CBS 513.65 / DSM 816 / NCTC 3887 / NRRL 1 / QM 1276 / 107).